A 409-amino-acid polypeptide reads, in one-letter code: MEYSEEGWMDQADSFPPRLLAIFFALFDPLQGPIVACEAPAGSVTNVDGGKNCLLPFETISDYVIPKRELCNKTITVCTNHYQVIGHPISIIGSNYERNALIFNMCMIFHEEEDSACYIPLVKRLARNLEVLEKQIHYISDLNKRPVIFSVIEQILEDMNNFCECMIQLDDQNSINIKLFPVFPSPPTVKSFHVPILTAQLDLLMDKNWDMTVQKVYPFINGINSVQRIAELANVSYRSCQKCMEHFLYYGCLIIADIFQFHNIYAMTTNAPNLLQDPDFQRECTAYVSTNSSNAKNVTFATIFKLYCSLRQGLRVKDWMNENKEIFKGLDVRRLISFGTIKGLIYRVHKYPYLERRTMRNNLTEEEKKLLGLLDGKHHFDELCVTLKKSPKVVNEMIAGLGDACFIYV.

It belongs to the NPR2 family.

The protein resides in the cytoplasm. It is found in the nucleus. Its function is as follows. Mediates inactivation of the TORC1 complex in response to amino acid starvation. Post-transcriptional regulator of nitrogen permeases. In Schizosaccharomyces pombe (strain 972 / ATCC 24843) (Fission yeast), this protein is Nitrogen permease regulator 2 homolog.